A 354-amino-acid chain; its full sequence is Dual-specificity RNA methyltransferase RlmN (354 aa).

E86 functions as the Proton acceptor in the catalytic mechanism. The 234-residue stretch at 105-338 (RHARYTICVS…CTIRQSKGLD (234 aa)) folds into the Radical SAM core domain. C112 and C343 are oxidised to a cystine. [4Fe-4S] cluster contacts are provided by C119, C123, and C126. Residues 169–170 (GE), S201, 224–226 (SLH), and N300 each bind S-adenosyl-L-methionine. Catalysis depends on C343, which acts as the S-methylcysteine intermediate.

It belongs to the radical SAM superfamily. RlmN family. It depends on [4Fe-4S] cluster as a cofactor.

The protein localises to the cytoplasm. It carries out the reaction adenosine(2503) in 23S rRNA + 2 reduced [2Fe-2S]-[ferredoxin] + 2 S-adenosyl-L-methionine = 2-methyladenosine(2503) in 23S rRNA + 5'-deoxyadenosine + L-methionine + 2 oxidized [2Fe-2S]-[ferredoxin] + S-adenosyl-L-homocysteine. It catalyses the reaction adenosine(37) in tRNA + 2 reduced [2Fe-2S]-[ferredoxin] + 2 S-adenosyl-L-methionine = 2-methyladenosine(37) in tRNA + 5'-deoxyadenosine + L-methionine + 2 oxidized [2Fe-2S]-[ferredoxin] + S-adenosyl-L-homocysteine. In terms of biological role, specifically methylates position 2 of adenine 2503 in 23S rRNA and position 2 of adenine 37 in tRNAs. m2A2503 modification seems to play a crucial role in the proofreading step occurring at the peptidyl transferase center and thus would serve to optimize ribosomal fidelity. In Campylobacter fetus subsp. fetus (strain 82-40), this protein is Dual-specificity RNA methyltransferase RlmN.